Consider the following 159-residue polypeptide: Eukaryotic translation initiation factor 5A-2 (159 aa).

Residues 1 to 12 (MSDEEHQFESKA) show a composition bias toward basic and acidic residues. Residues 1–23 (MSDEEHQFESKADAGASKTYPQQ) form a disordered region. A Hypusine modification is found at lysine 52.

Belongs to the eIF-5A family. In terms of processing, lys-52 undergoes hypusination, a unique post-translational modification that consists in the addition of a butylamino group from spermidine to lysine side chain, leading to the formation of the unusual amino acid hypusine. eIF-5As are the only known proteins to undergo this modification, which is essential for their function.

Its function is as follows. Translation factor that promotes translation elongation and termination, particularly upon ribosome stalling at specific amino acid sequence contexts. Binds between the exit (E) and peptidyl (P) site of the ribosome and promotes rescue of stalled ribosome: specifically required for efficient translation of polyproline-containing peptides as well as other motifs that stall the ribosome. Acts as a ribosome quality control (RQC) cofactor by joining the RQC complex to facilitate peptidyl transfer during CAT tailing step. The sequence is that of Eukaryotic translation initiation factor 5A-2 (EIF-5A2) from Nicotiana plumbaginifolia (Leadwort-leaved tobacco).